A 271-amino-acid polypeptide reads, in one-letter code: ABC transporter I family member 10 (271 aa).

The ABC transporter domain occupies 40 to 267 (VECRNLCFSV…IKAKQSSYID (228 aa)). Residue 77-84 (GPNGCGKS) coordinates ATP.

It belongs to the ABC transporter superfamily. ABCI family.

The chain is ABC transporter I family member 10 (ABCI10) from Arabidopsis thaliana (Mouse-ear cress).